The chain runs to 404 residues: 8-amino-7-oxononanoate synthase (404 aa).

A substrate-binding site is contributed by Arg-20. 116 to 117 (GY) is a pyridoxal 5'-phosphate binding site. His-141 lines the substrate pocket. Residues Ser-187, His-215, and Thr-243 each contribute to the pyridoxal 5'-phosphate site. Lys-246 carries the N6-(pyridoxal phosphate)lysine modification. Position 366 (Thr-366) interacts with substrate.

It belongs to the class-II pyridoxal-phosphate-dependent aminotransferase family. BioF subfamily. In terms of assembly, homodimer. Pyridoxal 5'-phosphate is required as a cofactor.

It catalyses the reaction 6-carboxyhexanoyl-[ACP] + L-alanine + H(+) = (8S)-8-amino-7-oxononanoate + holo-[ACP] + CO2. It participates in cofactor biosynthesis; biotin biosynthesis. In terms of biological role, catalyzes the decarboxylative condensation of pimeloyl-[acyl-carrier protein] and L-alanine to produce 8-amino-7-oxononanoate (AON), [acyl-carrier protein], and carbon dioxide. This chain is 8-amino-7-oxononanoate synthase, found in Cupriavidus taiwanensis (strain DSM 17343 / BCRC 17206 / CCUG 44338 / CIP 107171 / LMG 19424 / R1) (Ralstonia taiwanensis (strain LMG 19424)).